A 1297-amino-acid polypeptide reads, in one-letter code: Phosphoribosylformylglycinamidine synthase (1297 aa).

Residues 301-329 (TAISPFPGAATGSGGEIRDEGATGRGAKP) form a disordered region. ATP is bound at residue 308-319 (GAATGSGGEIRD). 4 residues coordinate Mg(2+): Asp-680, Glu-719, Asn-723, and Asp-887. Ser-889 is a binding site for ATP. In terms of domain architecture, Glutamine amidotransferase type-1 spans 1045–1297 (IAILREQGVN…RLFRNARMVF (253 aa)). Cys-1138 functions as the Nucleophile in the catalytic mechanism. Catalysis depends on residues His-1263 and Glu-1265.

This sequence in the N-terminal section; belongs to the FGAMS family. In terms of assembly, monomer.

It is found in the cytoplasm. It catalyses the reaction N(2)-formyl-N(1)-(5-phospho-beta-D-ribosyl)glycinamide + L-glutamine + ATP + H2O = 2-formamido-N(1)-(5-O-phospho-beta-D-ribosyl)acetamidine + L-glutamate + ADP + phosphate + H(+). It functions in the pathway purine metabolism; IMP biosynthesis via de novo pathway; 5-amino-1-(5-phospho-D-ribosyl)imidazole from N(2)-formyl-N(1)-(5-phospho-D-ribosyl)glycinamide: step 1/2. Its function is as follows. Phosphoribosylformylglycinamidine synthase involved in the purines biosynthetic pathway. Catalyzes the ATP-dependent conversion of formylglycinamide ribonucleotide (FGAR) and glutamine to yield formylglycinamidine ribonucleotide (FGAM) and glutamate. In Haemophilus influenzae (strain ATCC 51907 / DSM 11121 / KW20 / Rd), this protein is Phosphoribosylformylglycinamidine synthase.